The chain runs to 668 residues: Auxilin-like clathrin uncoating factor SWA2 (668 aa).

A disordered region spans residues 1-95; the sequence is MSDPFAHLLT…ANNTPPSALA (95 aa). A CB1 region spans residues 1–100; the sequence is MSDPFAHLLT…PSALANTDDD (100 aa). Residues 17–36 show a composition bias toward polar residues; that stretch reads SASASKETTPQSSNSPSITG. Phosphoserine occurs at positions 52 and 64. A compositionally biased stretch (low complexity) spans 76 to 92; that stretch reads PTNSTTKSNTANNTPPS. Residues 140 to 180 form the UBA domain; the sequence is DEVKDMEIARLMSLGLSIEEATEFYENDVTYERYLEILKSK. The CB2 stretch occupies residues 238–302; the sequence is EANDRLNNYS…FETKIDITKR (65 aa). A phosphoserine mark is found at Ser-264, Ser-308, and Ser-312. Disordered regions lie at residues 302 to 323 and 339 to 359; these read RTAP…EENS and EGNL…ENSN. The interval 303–362 is CB3; sequence TAPDVSHSSSPTSGILIEENSRRNEPLIEDSLLDFSEGNLTNSKSNEDSTLFNENSNTDS. The segment covering 340–359 has biased composition (polar residues); that stretch reads GNLTNSKSNEDSTLFNENSN. TPR repeat units lie at residues 374–407, 412–445, and 467–500; these read YNEF…LPLN, IIAL…FPSS, and PKIM…NFFD. The disordered stretch occupies residues 511–556; that stretch reads QDFINPPPVKKSMPVKKKTTTTSPATKKQNLTASSSNSPISVDSTS. Residues 539 to 555 are compositionally biased toward polar residues; that stretch reads QNLTASSSNSPISVDST. The J domain occupies 603–668; the sequence is CNWKDVSMQD…DKFKLQNDIN (66 aa).

Interacts with the clathrin light and heavy chains CLC1 and CHC1, respectively. Binds to clathrin with its N-terminal domain containing 3 clathrin-binding (CB) motifs. Association with clathrin is transient. Binds to polyubiquitin and ubiquitinated proteins.

It localises to the cytoplasm. Its subcellular location is the endoplasmic reticulum membrane. Its function is as follows. Cofactor for the uncoating of clathrin-coated vesicles (CCVs) by Hsp70-type chaperones (SSA1/2/3 and SSB1/2). Coat disassembly is important for fusion of vesicles with target membranes and for recycling components of clathrin coats to the cytoplasm for further rounds of vesicle formation. Binds to assembled clathrin and recruits the ATP-activated chaperone to CCVs. Stimulates the ATPase activity of the clathrin-associated Hsp70-type chaperone SSA1, which then disrupts clathrin-clathrin interactions, leading to release of the clathrin coat. In addition, prevents unproductive clathrin assembly in the cell. Also required for cortical endoplasmic reticulum inheritance. The protein is Auxilin-like clathrin uncoating factor SWA2 (SWA2) of Saccharomyces cerevisiae (strain ATCC 204508 / S288c) (Baker's yeast).